The chain runs to 396 residues: 1-deoxy-D-xylulose 5-phosphate reductoisomerase (396 aa).

Residues T10, G11, S12, I13, G36, K37, N38, and N124 each coordinate NADPH. A 1-deoxy-D-xylulose 5-phosphate-binding site is contributed by K125. E126 lines the NADPH pocket. D150 contacts Mn(2+). 1-deoxy-D-xylulose 5-phosphate-binding residues include S151, E152, S186, and H209. A Mn(2+)-binding site is contributed by E152. G215 contacts NADPH. 4 residues coordinate 1-deoxy-D-xylulose 5-phosphate: S222, N227, K228, and E231. E231 contributes to the Mn(2+) binding site.

Belongs to the DXR family. Requires Mg(2+) as cofactor. Mn(2+) is required as a cofactor.

It catalyses the reaction 2-C-methyl-D-erythritol 4-phosphate + NADP(+) = 1-deoxy-D-xylulose 5-phosphate + NADPH + H(+). It participates in isoprenoid biosynthesis; isopentenyl diphosphate biosynthesis via DXP pathway; isopentenyl diphosphate from 1-deoxy-D-xylulose 5-phosphate: step 1/6. In terms of biological role, catalyzes the NADPH-dependent rearrangement and reduction of 1-deoxy-D-xylulose-5-phosphate (DXP) to 2-C-methyl-D-erythritol 4-phosphate (MEP). The protein is 1-deoxy-D-xylulose 5-phosphate reductoisomerase of Glaesserella parasuis serovar 5 (strain SH0165) (Haemophilus parasuis).